A 90-amino-acid chain; its full sequence is Heat shock protein beta-7 (90 aa).

Positions 39–90 constitute a sHSP domain; the sequence is PLTFPARPGGQGNIKTLGDAYEFTVDMRDFSPEDIIVTTSNNHIEVRAEKKP.

This sequence belongs to the small heat shock protein (HSP20) family. As to quaternary structure, interacts with C-terminal domain of actin-binding protein 280. Found in both cardiac and skeletal muscle.

The protein resides in the cytoplasm. It localises to the nucleus. It is found in the cajal body. This chain is Heat shock protein beta-7 (Hspb7), found in Rattus norvegicus (Rat).